Consider the following 1406-residue polypeptide: DNA-directed RNA polymerase subunit beta' (1406 aa).

The Zn(2+) site is built by C70, C72, C85, and C88. D460, D462, and D464 together coordinate Mg(2+). Zn(2+) contacts are provided by C814, C888, C895, and C898.

Belongs to the RNA polymerase beta' chain family. The RNAP catalytic core consists of 2 alpha, 1 beta, 1 beta' and 1 omega subunit. When a sigma factor is associated with the core the holoenzyme is formed, which can initiate transcription. Mg(2+) is required as a cofactor. It depends on Zn(2+) as a cofactor.

It catalyses the reaction RNA(n) + a ribonucleoside 5'-triphosphate = RNA(n+1) + diphosphate. Functionally, DNA-dependent RNA polymerase catalyzes the transcription of DNA into RNA using the four ribonucleoside triphosphates as substrates. The protein is DNA-directed RNA polymerase subunit beta' of Colwellia psychrerythraea (strain 34H / ATCC BAA-681) (Vibrio psychroerythus).